The following is a 117-amino-acid chain: Colipase (117 aa).

The N-terminal stretch at methionine 1–alanine 22 is a signal peptide. Cystine bridges form between cysteine 39/cysteine 50, cysteine 45/cysteine 61, cysteine 49/cysteine 83, cysteine 71/cysteine 91, and cysteine 85/cysteine 109.

It belongs to the colipase family. In terms of assembly, forms a 1:1 stoichiometric complex with pancreatic lipase.

The protein resides in the secreted. Functionally, colipase is a cofactor of pancreatic lipase. It allows the lipase to anchor itself to the lipid-water interface. Without colipase the enzyme is washed off by bile salts, which have an inhibitory effect on the lipase. The polypeptide is Colipase (clps) (Xenopus tropicalis (Western clawed frog)).